We begin with the raw amino-acid sequence, 627 residues long: MSYQYSQEAKERISKLGQSEIVNFINEISPTLRRKAFGCLPKVPGFRAGHPTEIKEKQKRLIGYMFQSHPSSEERKAWKSFSLFWQFWAEEKIDKSFSMIDNLGLKENSGSIFIRELAKNFPKVARENIERLFIFSGFADDPDVINAFNLFPPAVVLARDIVVDTLPIRLDELEARISLIADNVEKKNNHIKELELKIDAFSERFDNYFNNEKSNLKIINELQSLINSETKQSDIANKSIDELYHFNEKNKQLILSLQEKLDFNALAMNDISEHEKLIKSMANEISELKNALTILCDNKRKNNELDYINELKKLTERIDTLEINTSQASKVSVTNRFTKFHEIAHYENYEYLSSSEDISNRISLNLQAVGLTKNSAETLARLTLATFVSGQIIQFSGSLADIIADAIAIAIGAPRYHIWRVPVGIISDMDSFDFIETIAESSRCLLLKGANLSAFEIYGAAIRDIVVQRQIHPTNYDHLALIATWKQGPATFPDGGMLAELGPVIDTDTLKMRGLSAILPQLKPGCLAKDKWTNIDGLQLDSVDDYVDELRALLDEAGFDGGTLWKRMVHIFYTSLIRVPNGNYIYDLYSVLSFYTLTWAKIKGGPVQKIEDIANRELKNYSAKISS.

The protein resides in the cytoplasm. Functionally, component of antiviral defense system Druantia type I, composed of DruA, DruB, DruC, DruD and DruE. Expression of Druantia in E.coli (strain MG1655) confers resistance to phage lambda, SECphi18, SECphi27 and T4. This Escherichia coli (strain UMEA 4076-1) protein is Druantia protein DruC.